A 185-amino-acid chain; its full sequence is Peptidyl-tRNA hydrolase (185 aa).

Residue Tyr-14 participates in tRNA binding. His-19 serves as the catalytic Proton acceptor. Phe-64, Asn-66, and Asn-112 together coordinate tRNA.

This sequence belongs to the PTH family. As to quaternary structure, monomer.

The protein resides in the cytoplasm. It catalyses the reaction an N-acyl-L-alpha-aminoacyl-tRNA + H2O = an N-acyl-L-amino acid + a tRNA + H(+). In terms of biological role, hydrolyzes ribosome-free peptidyl-tRNAs (with 1 or more amino acids incorporated), which drop off the ribosome during protein synthesis, or as a result of ribosome stalling. Its function is as follows. Catalyzes the release of premature peptidyl moieties from peptidyl-tRNA molecules trapped in stalled 50S ribosomal subunits, and thus maintains levels of free tRNAs and 50S ribosomes. This chain is Peptidyl-tRNA hydrolase, found in Lactobacillus gasseri (strain ATCC 33323 / DSM 20243 / BCRC 14619 / CIP 102991 / JCM 1131 / KCTC 3163 / NCIMB 11718 / NCTC 13722 / AM63).